The following is a 181-amino-acid chain: Oligoribonuclease (181 aa).

One can recognise an Exonuclease domain in the interval Leu8 to Leu171. Tyr129 is an active-site residue.

The protein belongs to the oligoribonuclease family.

The protein localises to the cytoplasm. Functionally, 3'-to-5' exoribonuclease specific for small oligoribonucleotides. The polypeptide is Oligoribonuclease (Vibrio campbellii (strain ATCC BAA-1116)).